Here is a 180-residue protein sequence, read N- to C-terminus: Shikimate kinase (180 aa).

Residue 19-24 (GAGKTT) coordinates ATP. Position 23 (Thr-23) interacts with Mg(2+). Substrate is bound by residues Asp-41, Arg-65, and Gly-87. Arg-125 lines the ATP pocket. Arg-144 contacts substrate.

The protein belongs to the shikimate kinase family. In terms of assembly, monomer. Requires Mg(2+) as cofactor.

The protein resides in the cytoplasm. The catalysed reaction is shikimate + ATP = 3-phosphoshikimate + ADP + H(+). It participates in metabolic intermediate biosynthesis; chorismate biosynthesis; chorismate from D-erythrose 4-phosphate and phosphoenolpyruvate: step 5/7. Its function is as follows. Catalyzes the specific phosphorylation of the 3-hydroxyl group of shikimic acid using ATP as a cosubstrate. This is Shikimate kinase from Acinetobacter baumannii (strain SDF).